The chain runs to 272 residues: MFGYFYNSSFRRYATLMGDLFSNIQIKRQLESGDKFIRVPITYASKEHFMMKLNKWTSINSQEDVAKVETILPRINLHLVDFSYNAPFKTNILNQNLLQKGATSVVSQYNPSPIKMIYELSIFTRYEDDMFQIVEQILPYFQPHFNTTMYEQFGNDIPFKRDIKIVLMSAAIDEAIDGDNLSRRRIEWSLTFEVNGWMYPPVDDAEGLIRTTYTDFHANTRDLPDGEGVFESVDSEVVPRDIDPEDWDGTVKQTFTSNVNRPTPPEPPGPRT.

Positions 240 to 272 (RDIDPEDWDGTVKQTFTSNVNRPTPPEPPGPRT) are disordered. The span at 251 to 260 (VKQTFTSNVN) shows a compositional bias: polar residues. Over residues 262 to 272 (PTPPEPPGPRT) the composition is skewed to pro residues.

As to quaternary structure, hexamer. Interacts with gp3 and gp18 on the bottom part of the hexamer. Interacts with gp13 and gp14 on the top part of the hexamer.

The protein resides in the virion. Functionally, stabilizes the tail sheath structure and acts as a connector between the end of tail and the portal vertex of the capsid. This chain is Tail completion protein gp15 (15), found in Enterobacteria phage T4 (Bacteriophage T4).